The chain runs to 210 residues: Nucleoside triphosphate pyrophosphatase (210 aa).

The Proton acceptor role is filled by Asp79.

This sequence belongs to the Maf family. A divalent metal cation serves as cofactor.

It localises to the cytoplasm. It carries out the reaction a ribonucleoside 5'-triphosphate + H2O = a ribonucleoside 5'-phosphate + diphosphate + H(+). The catalysed reaction is a 2'-deoxyribonucleoside 5'-triphosphate + H2O = a 2'-deoxyribonucleoside 5'-phosphate + diphosphate + H(+). Its function is as follows. Nucleoside triphosphate pyrophosphatase. May have a dual role in cell division arrest and in preventing the incorporation of modified nucleotides into cellular nucleic acids. This chain is Nucleoside triphosphate pyrophosphatase, found in Mycolicibacterium paratuberculosis (strain ATCC BAA-968 / K-10) (Mycobacterium paratuberculosis).